The chain runs to 536 residues: Chaperonin GroEL (536 aa).

ATP-binding positions include 30–33 (TLGP), 86–90 (DGTTT), G414, and D494.

Belongs to the chaperonin (HSP60) family. In terms of assembly, forms a cylinder of 14 subunits composed of two heptameric rings stacked back-to-back. Interacts with the co-chaperonin GroES.

The protein resides in the cytoplasm. It catalyses the reaction ATP + H2O + a folded polypeptide = ADP + phosphate + an unfolded polypeptide.. Together with its co-chaperonin GroES, plays an essential role in assisting protein folding. The GroEL-GroES system forms a nano-cage that allows encapsulation of the non-native substrate proteins and provides a physical environment optimized to promote and accelerate protein folding. The sequence is that of Chaperonin GroEL from Methanosarcina barkeri (strain Fusaro / DSM 804).